A 135-amino-acid polypeptide reads, in one-letter code: MSCQGPVCTNLGLKPGQRLTVKGIIAPNAKSFVMNLGKDSTHLGLHFNPRFDAHGDVNLIVCNSKKMEEWGTEQRETVFPFQKGAPIEITFSINPSDLTVHLPGHQFSFPNRLGLSVFDYFDTHGDFTLRSVSWE.

The residue at position 2 (S2) is an N-acetylserine. The cysteines at positions 3 and 8 are disulfide-linked. One can recognise a Galectin domain in the interval 5–135; the sequence is GPVCTNLGLK…DFTLRSVSWE (131 aa). A beta-D-galactoside contacts are provided by residues 46–50, H54, N63, 70–73, and 70–76; these read HFNPR, WGTE, and WGTEQRE.

Homodimer; disulfide-linked. As to quaternary structure, (Microbial infection) Interacts with newcastle disease virus protein HN; this interaction inhibits viral adsorption rather than internalization. In terms of tissue distribution, mainly in the intestine (adult), mainly in the skin (embryo).

Its function is as follows. This protein binds beta-galactoside. May participate in host antiviral defense through specific interaction with glycans on the viral envelope glycoproteins. The sequence is that of Beta-galactoside-binding lectin (CG-1B) from Gallus gallus (Chicken).